A 1033-amino-acid chain; its full sequence is Probable LRR receptor-like serine/threonine-protein kinase At1g56140 (1033 aa).

An N-terminal signal peptide occupies residues 1 to 28 (MLRLWRYLCLLLTVWFLCNFGPVYVVRA). At 29–636 (QNRTGATTHP…PSKGKSMTGT (608 aa)) the chain is on the extracellular side. N-linked (GlcNAc...) asparagine glycans are attached at residues Asn-30, Asn-60, and Asn-94. LRR repeat units lie at residues 97-121 (ICRITNIKVYAMEVVGSIPQQLWTL), 122-145 (EYLTNLNLGQNVLTGSLPPALGNL), 147-169 (RMRWMTFGINALSGPIPKEIGLL), 170-193 (TDLRLLSISSNNFSGSIPDEIGRC), 195-217 (KLQQIYIDSSGLSGGLPVSFANL), 241-264 (WTKLTTLRILGTGLSGPIPASFSN), 265-288 (LTSLTELRLGDISNGNSSLEFIKD), 289-313 (MKSLSILVLRNNNLTGTIPSNIGEY), 314-337 (SSLRQLDLSFNKLHGTIPASLFNL), 339-361 (QLTHLFLGNNTLNGSLPTQKGQS), 363-382 (SNVDVSYNDLSGSLPSWVSL), 383-406 (PNLNLNLVANNFTLEGLDNRVLSG), and 422-445 (IYSDFSINCGGPEIRSVTEAVFER). N-linked (GlcNAc...) asparagine glycosylation is present at Asn-144. An N-linked (GlcNAc...) asparagine glycan is attached at Asn-181. Asn-264, Asn-280, and Asn-301 each carry an N-linked (GlcNAc...) asparagine glycan. Asn-347 and Asn-351 each carry an N-linked (GlcNAc...) asparagine glycan. N-linked (GlcNAc...) asparagine glycosylation is present at Asn-393. Asn-579 is a glycosylation site (N-linked (GlcNAc...) asparagine). The helical transmembrane segment at 637–657 (IVGVIVGVGLLSIISGVVIFI) threads the bilayer. Topologically, residues 658–1033 (IRKRRKRYTD…MLGAQMNEGR (376 aa)) are cytoplasmic. The residue at position 682 (Thr-682) is a Phosphothreonine. The Protein kinase domain maps to 693 to 951 (FDPSNKLGEG…LCTQTSHALR (259 aa)). ATP-binding positions include 699 to 707 (LGEGGFGPV) and Lys-721. Position 766 is a phosphotyrosine (Tyr-766). Residue Asp-817 is the Proton acceptor of the active site. Phosphoserine is present on residues Ser-821 and Ser-850. Phosphothreonine is present on residues Thr-851 and Thr-856. Tyr-864 is modified (phosphotyrosine). The interval 1012-1033 (SEISPRNNDARPMLGAQMNEGR) is disordered.

The protein belongs to the protein kinase superfamily. Ser/Thr protein kinase family.

It localises to the membrane. It catalyses the reaction L-seryl-[protein] + ATP = O-phospho-L-seryl-[protein] + ADP + H(+). The catalysed reaction is L-threonyl-[protein] + ATP = O-phospho-L-threonyl-[protein] + ADP + H(+). The polypeptide is Probable LRR receptor-like serine/threonine-protein kinase At1g56140 (Arabidopsis thaliana (Mouse-ear cress)).